The chain runs to 132 residues: Large ribosomal subunit protein uL14 (132 aa).

The protein belongs to the universal ribosomal protein uL14 family. Part of the 50S ribosomal subunit. Forms a cluster with proteins L3 and L24e, part of which may contact the 16S rRNA in 2 intersubunit bridges.

In terms of biological role, binds to 23S rRNA. Forms part of two intersubunit bridges in the 70S ribosome. The chain is Large ribosomal subunit protein uL14 from Methanococcus maripaludis (strain C5 / ATCC BAA-1333).